A 183-amino-acid chain; its full sequence is Capsid protein (183 aa).

Residues 136–183 (NAPILSTLPETTVVRRRGRSPRRRTPSPRRRRSQSPRRRRSQSRESQC) form a disordered region. The segment covering 149–176 (VRRRGRSPRRRTPSPRRRRSQSPRRRRS) has biased composition (basic residues). 3 positions are modified to phosphoserine; by host: S155, S162, and S170. Residues 155 to 161 (SPRRRTP) form a 1; half-length repeat. The 3 X 8 AA repeats of S-P-R-R-R-[PR]-S-Q stretch occupies residues 155-177 (SPRRRTPSPRRRRSQSPRRRRSQ). The Bipartite nuclear localization signal signature appears at 158-175 (RRTPSPRRRRSQSPRRRR). 2 consecutive repeat copies span residues 162 to 169 (SPRRRRSQ) and 170 to 177 (SPRRRRSQ). The tract at residues 177 to 183 (QSRESQC) is RNA binding.

Belongs to the orthohepadnavirus core antigen family. As to quaternary structure, homodimerizes, then multimerizes. Interacts with cytosol exposed regions of viral L glycoprotein present in the reticulum-to-Golgi compartment. Interacts with human FLNB. Phosphorylated form interacts with host importin alpha; this interaction depends on the exposure of the NLS, which itself depends upon genome maturation and/or phosphorylation of the capsid protein. Interacts with host NUP153. Phosphorylated by host SRPK1, SRPK2, and maybe protein kinase C or GAPDH. Phosphorylation is critical for pregenomic RNA packaging. Protein kinase C phosphorylation is stimulated by HBx protein and may play a role in transport of the viral genome to the nucleus at the late step during the viral replication cycle.

It is found in the virion. The protein localises to the host cytoplasm. In terms of biological role, self assembles to form an icosahedral capsid. Most capsids appear to be large particles with an icosahedral symmetry of T=4 and consist of 240 copies of capsid protein, though a fraction forms smaller T=3 particles consisting of 180 capsid proteins. Entering capsids are transported along microtubules to the nucleus. Phosphorylation of the capsid is thought to induce exposure of nuclear localization signal in the C-terminal portion of the capsid protein that allows binding to the nuclear pore complex via the importin (karyopherin-) alpha and beta. Capsids are imported in intact form through the nuclear pore into the nuclear basket, where it probably binds NUP153. Only capsids that contain the mature viral genome can release the viral DNA and capsid protein into the nucleoplasm. Immature capsids get stuck in the basket. Capsids encapsulate the pre-genomic RNA and the P protein. Pre-genomic RNA is reverse-transcribed into DNA while the capsid is still in the cytoplasm. The capsid can then either be directed to the nucleus, providing more genomes for transcription, or bud through the endoplasmic reticulum to provide new virions. This Hepatitis B virus genotype D subtype ayw (isolate Italy/CI/1992) (HBV-D) protein is Capsid protein.